A 465-amino-acid chain; its full sequence is Hepatocyte nuclear factor 6 (465 aa).

2 disordered regions span residues 15–84 and 119–141; these read GVSH…GPLH and SDKF…HQRL. A compositionally biased stretch (basic residues) spans 123–140; sequence PHHHHHHHHHHHPHHHQR. A DNA-binding region (CUT) is located at residues 283–369; it reads GSNSGQMEEI…QRMSALRLAA (87 aa). Residues 385-444 constitute a DNA-binding region (homeobox); it reads PKKPRLVFTDVQRRTLHAIFKENKRPSKELQITISQQLGLELSTVSNFFMNARRRSLDKW. Residues 442 to 465 are disordered; that stretch reads DKWQDEGSSNSGNSSSSSSTCTKA. Residues 448–465 are compositionally biased toward low complexity; it reads GSSNSGNSSSSSSTCTKA.

It belongs to the CUT homeobox family. In terms of assembly, binds DNA as a monomer. Expressed in liver, brain, spleen and testis.

It localises to the nucleus. Its function is as follows. Transcriptional activator. Binds the consensus sequence 5'-DHWATTGAYTWWD-3' on a variety of gene promoters such as those of HNF3B and TTR. Important for liver genes transcription. The affinity of HNF-6-alpha and HNF-6-beta for DNA differs depending on the target sequence. The polypeptide is Hepatocyte nuclear factor 6 (Onecut1) (Rattus norvegicus (Rat)).